A 1607-amino-acid chain; its full sequence is Putative molluscan insulin-related peptide(s) receptor (1607 aa).

The first 35 residues, 1–35 (MHPGSISFNMIINKCIPICLFILFIMMMEFTVSKA), serve as a signal peptide directing secretion. Residues asparagine 82, asparagine 188, asparagine 245, asparagine 275, asparagine 332, asparagine 343, asparagine 495, asparagine 520, asparagine 663, asparagine 710, asparagine 778, asparagine 796, asparagine 802, asparagine 868, asparagine 879, asparagine 940, and asparagine 953 are each glycosylated (N-linked (GlcNAc...) asparagine). Fibronectin type-III domains follow at residues 517 to 632 (HDLN…TYPF), 636 to 726 (EPTD…SKEE), and 756 to 861 (LPDE…TKDS). The Extracellular portion of the chain corresponds to 698–975 (EKVKIEEEGK…RPPDPESSNT (278 aa)). A Fibronectin type-III 4 domain is found at 870–967 (TTVDTEIETN…LERFFIVPRP (98 aa)). A helical membrane pass occupies residues 976-996 (LLIVAIVLAFFGVLTVSLIVA). Over 997–1607 (CVYYKQKIRS…WSTLKMVLVL (611 aa)) the chain is Cytoplasmic. A Protein kinase domain is found at 1037–1308 (IKLIKELGQG…AIIEYLLPKL (272 aa)). ATP-binding positions include 1043–1051 (LGQGSFGMV) and lysine 1072. Catalysis depends on aspartate 1173, which acts as the Proton acceptor. Tyrosine 1199 is subject to Phosphotyrosine; by autocatalysis. Disordered stretches follow at residues 1328-1352 (GAGE…LSCE) and 1501-1539 (TLNG…SSSW). A compositionally biased stretch (polar residues) spans 1503 to 1515 (NGNQSSHNNNSFE). The span at 1524–1538 (SGPASESSNGVSSSS) shows a compositional bias: low complexity.

It belongs to the protein kinase superfamily. Tyr protein kinase family. Insulin receptor subfamily. In terms of assembly, probable tetramer of 2 alpha and 2 beta chains linked by disulfide bonds. The alpha chains contribute to the formation of the ligand-binding domain, while the beta chains carry the kinase domain. The cofactor is Mn(2+).

It is found in the membrane. It catalyses the reaction L-tyrosyl-[protein] + ATP = O-phospho-L-tyrosyl-[protein] + ADP + H(+). This receptor probably binds to the four different molluscan insulin-related peptides and has a tyrosine-protein kinase activity. The chain is Putative molluscan insulin-related peptide(s) receptor from Lymnaea stagnalis (Great pond snail).